The chain runs to 224 residues: UPF0758 protein NE1464 (224 aa).

The MPN domain maps to 102–224; that stretch reads IMDSPQSVRN…VVSFAERGLI (123 aa). Residues H173, H175, and D186 each coordinate Zn(2+). Residues 173–186 carry the JAMM motif motif; sequence HNHPSGIAEPSTAD.

It belongs to the UPF0758 family.

The chain is UPF0758 protein NE1464 from Nitrosomonas europaea (strain ATCC 19718 / CIP 103999 / KCTC 2705 / NBRC 14298).